The primary structure comprises 203 residues: Cilia- and flagella-associated protein 20 (203 aa).

The protein belongs to the CFAP20 family.

It is found in the nucleus. It localises to the cytoplasm. The protein resides in the cytoskeleton. Its subcellular location is the microtubule organizing center. The protein localises to the centrosome. It is found in the centriole. It localises to the cilium basal body. The protein resides in the cilium axoneme. Its function is as follows. Cilium- and flagellum-specific protein that plays a role in axonemal structure organization and motility. Microtubule inner protein (MIP) part of the dynein-decorated doublet microtubules (DMTs) in cilia axoneme, which is required for motile cilia beating. Involved in the regulation of the size and morphology of cilia. Required for axonemal microtubules polyglutamylation. The sequence is that of Cilia- and flagella-associated protein 20 from Caenorhabditis elegans.